Consider the following 82-residue polypeptide: Myrmicitoxin(1)-Pm3a (82 aa).

A signal peptide spans 1–23; sequence MEIPKLLYIAVIAIGLSGSLTCA. Residues 24-59 constitute a propeptide that is removed on maturation; it reads TPLANPLADPEAEAEAKATAEATAEAIAEALAEPEP. L81 carries the leucine amide modification.

Belongs to the formicidae venom clade 1 family. Expressed by the venom gland.

The protein localises to the secreted. Functionally, toxin that causes a slowly developing temporary paralysis when intrathoracically injected into insects (blowflies). Does not cause spontaneous nocifensive behaviors by intraplantar injection in mice. The polypeptide is Myrmicitoxin(1)-Pm3a (Pogonomyrmex maricopa (Maricopa harvester ant)).